The primary structure comprises 766 residues: Protein STB6 (766 aa).

The disordered stretch occupies residues 447–469 (VPSEQLTTSNKEDSDTQPTKRNS). The residue at position 514 (S514) is a Phosphoserine.

The protein to yeast STB2.

Functionally, binds to SIN3. This chain is Protein STB6 (STB6), found in Saccharomyces cerevisiae (strain ATCC 204508 / S288c) (Baker's yeast).